Here is a 569-residue protein sequence, read N- to C-terminus: Urease subunit alpha (569 aa).

The Urease domain maps to 131–569; the sequence is GGIDSHIHFI…LPLAQRYFLF (439 aa). H136, H138, and K219 together coordinate Ni(2+). K219 bears the N6-carboxylysine mark. H221 serves as a coordination point for substrate. Ni(2+) is bound by residues H248 and H274. H322 (proton donor) is an active-site residue. D362 contacts Ni(2+).

It belongs to the metallo-dependent hydrolases superfamily. Urease alpha subunit family. As to quaternary structure, heterotrimer of UreA (gamma), UreB (beta) and UreC (alpha) subunits. Three heterotrimers associate to form the active enzyme. Ni cation is required as a cofactor. Post-translationally, carboxylation allows a single lysine to coordinate two nickel ions.

Its subcellular location is the cytoplasm. The catalysed reaction is urea + 2 H2O + H(+) = hydrogencarbonate + 2 NH4(+). The protein operates within nitrogen metabolism; urea degradation; CO(2) and NH(3) from urea (urease route): step 1/1. This Herpetosiphon aurantiacus (strain ATCC 23779 / DSM 785 / 114-95) protein is Urease subunit alpha.